The chain runs to 293 residues: ATP synthase gamma chain (293 aa).

It belongs to the ATPase gamma chain family. F-type ATPases have 2 components, CF(1) - the catalytic core - and CF(0) - the membrane proton channel. CF(1) has five subunits: alpha(3), beta(3), gamma(1), delta(1), epsilon(1). CF(0) has three main subunits: a, b and c.

The protein resides in the cell inner membrane. Produces ATP from ADP in the presence of a proton gradient across the membrane. The gamma chain is believed to be important in regulating ATPase activity and the flow of protons through the CF(0) complex. The chain is ATP synthase gamma chain from Psychrobacter cryohalolentis (strain ATCC BAA-1226 / DSM 17306 / VKM B-2378 / K5).